A 22-amino-acid polypeptide reads, in one-letter code: Myofibril-bound serine protease (22 aa).

It belongs to the peptidase S1 family. In terms of tissue distribution, detected in muscle (at protein level).

It is found in the cytoplasm. With respect to regulation, inhibited by the serine protease inhibitors, antipain, aprotinin, DFP, leupeptin, STI and TLCK, and by the cysteine proteinase inhibitors DTNB and to a lesser extent E-64. Not inhibited by the metalloproteinase inhibitor EDTA. Serine protease that selectively cleaves Arg-|-Xaa bonds. This is Myofibril-bound serine protease from Cyprinus carpio (Common carp).